Consider the following 169-residue polypeptide: UPF0725 protein At2g19200 (169 aa).

Belongs to the UPF0725 (EMB2204) family.

The polypeptide is UPF0725 protein At2g19200 (Arabidopsis thaliana (Mouse-ear cress)).